A 122-amino-acid chain; its full sequence is Vitelline membrane protein 15a-3 (122 aa).

A signal peptide spans 1–17 (MNKFIILALFAVAAASA). Over residues 21 to 49 (YPPPPPKPYHAPPPPPHHAHPPPPPPPPA) the composition is skewed to pro residues. Disordered stretches follow at residues 21–63 (YPPP…APVV) and 103–122 (PAPAPHYRAPESDSFDQFEE). The VM domain maps to 69–109 (HAPHAKCGANLLVGCAPSVAHAPCVPLHGHGHGYPAPAPHY).

The protein belongs to the vitelline membrane protein family. As to expression, expressed in the middle and posterior regions of the follicle cells.

The protein resides in the secreted. The polypeptide is Vitelline membrane protein 15a-3 (Aedes aegypti (Yellowfever mosquito)).